Here is a 122-residue protein sequence, read N- to C-terminus: Large ribosomal subunit protein uL14 (122 aa).

The protein belongs to the universal ribosomal protein uL14 family. In terms of assembly, part of the 50S ribosomal subunit. Forms a cluster with proteins L3 and L19. In the 70S ribosome, L14 and L19 interact and together make contacts with the 16S rRNA in bridges B5 and B8.

Functionally, binds to 23S rRNA. Forms part of two intersubunit bridges in the 70S ribosome. The chain is Large ribosomal subunit protein uL14 from Maridesulfovibrio salexigens (strain ATCC 14822 / DSM 2638 / NCIMB 8403 / VKM B-1763) (Desulfovibrio salexigens).